Consider the following 186-residue polypeptide: MKDEHNQEHDLSQKELESCENSCTCEGKKQEASEKECEIKEDFELKYQEMHEKYLRVHADFENVKKRLERDKSMALEYAYEKIALDLLPVIDALLGAHKSASGDDKESALTKGLELTMEKLHEVLARHGIEGIECLEEFDPNFHNAIMQVKSEEKENGKIVQVLQQGYKYKGRVLRPAMVSIAKND.

Residues 1-17 show a composition bias toward basic and acidic residues; it reads MKDEHNQEHDLSQKELE. A disordered region spans residues 1-32; the sequence is MKDEHNQEHDLSQKELESCENSCTCEGKKQEA.

The protein belongs to the GrpE family. Homodimer.

It is found in the cytoplasm. Participates actively in the response to hyperosmotic and heat shock by preventing the aggregation of stress-denatured proteins, in association with DnaK and GrpE. It is the nucleotide exchange factor for DnaK and may function as a thermosensor. Unfolded proteins bind initially to DnaJ; upon interaction with the DnaJ-bound protein, DnaK hydrolyzes its bound ATP, resulting in the formation of a stable complex. GrpE releases ADP from DnaK; ATP binding to DnaK triggers the release of the substrate protein, thus completing the reaction cycle. Several rounds of ATP-dependent interactions between DnaJ, DnaK and GrpE are required for fully efficient folding. The polypeptide is Protein GrpE (Helicobacter acinonychis (strain Sheeba)).